Consider the following 237-residue polypeptide: Demethylmenaquinone methyltransferase (237 aa).

Residues T58, D79, and 106 to 107 (NA) contribute to the S-adenosyl-L-methionine site.

Belongs to the class I-like SAM-binding methyltransferase superfamily. MenG/UbiE family.

The enzyme catalyses a 2-demethylmenaquinol + S-adenosyl-L-methionine = a menaquinol + S-adenosyl-L-homocysteine + H(+). Its pathway is quinol/quinone metabolism; menaquinone biosynthesis; menaquinol from 1,4-dihydroxy-2-naphthoate: step 2/2. In terms of biological role, methyltransferase required for the conversion of demethylmenaquinol (DMKH2) to menaquinol (MKH2). This Bacillus cereus (strain ATCC 10987 / NRS 248) protein is Demethylmenaquinone methyltransferase.